The primary structure comprises 226 residues: UPF0758 protein Sca_1264 (226 aa).

Positions 102 to 224 (KITSPQDAAD…YLSMVEGGYF (123 aa)) constitute an MPN domain. Zn(2+)-binding residues include histidine 173, histidine 175, and aspartate 186. The JAMM motif signature appears at 173-186 (HNHPSGDVTPSKED).

It belongs to the UPF0758 family.

The chain is UPF0758 protein Sca_1264 from Staphylococcus carnosus (strain TM300).